The sequence spans 440 residues: Probable carboxypeptidase AFUB_072730 (440 aa).

Residues Met1–Ala16 form the signal peptide. 2 N-linked (GlcNAc...) asparagine glycosylation sites follow: Asn87 and Asn149. Asp165 provides a ligand contact to Zn(2+). Glu197 (proton acceptor) is an active-site residue. Glu198 is a Zn(2+) binding site. N-linked (GlcNAc...) asparagine glycosylation is found at Asn353 and Asn372.

This sequence belongs to the peptidase M20A family. Requires Zn(2+) as cofactor.

Its subcellular location is the secreted. This is Probable carboxypeptidase AFUB_072730 from Aspergillus fumigatus (strain CBS 144.89 / FGSC A1163 / CEA10) (Neosartorya fumigata).